A 236-amino-acid chain; its full sequence is Urease accessory protein UreF (236 aa).

This sequence belongs to the UreF family. In terms of assembly, ureD, UreF and UreG form a complex that acts as a GTP-hydrolysis-dependent molecular chaperone, activating the urease apoprotein by helping to assemble the nickel containing metallocenter of UreC. The UreE protein probably delivers the nickel.

The protein resides in the cytoplasm. Its function is as follows. Required for maturation of urease via the functional incorporation of the urease nickel metallocenter. The chain is Urease accessory protein UreF from Synechocystis sp. (strain ATCC 27184 / PCC 6803 / Kazusa).